The sequence spans 124 residues: Fluoride-specific ion channel FluC (124 aa).

4 helical membrane-spanning segments follow: residues 4-24 (LLLVALGGSIGAVFRYLISIF), 35-55 (FGTLLVNVLGSFLMGVIYALG), 60-80 (ISPELKALIGIGLLGALTTFS), and 102-122 (VVLNLSLCLFMVYLGQQLVFS). Positions 74 and 77 each coordinate Na(+).

Belongs to the fluoride channel Fluc/FEX (TC 1.A.43) family.

The protein resides in the cell inner membrane. The catalysed reaction is fluoride(in) = fluoride(out). With respect to regulation, na(+) is not transported, but it plays an essential structural role and its presence is essential for fluoride channel function. Its function is as follows. Fluoride-specific ion channel. Important for reducing fluoride concentration in the cell, thus reducing its toxicity. The protein is Fluoride-specific ion channel FluC of Shewanella baltica (strain OS185).